A 104-amino-acid polypeptide reads, in one-letter code: Flagellar hook-basal body complex protein FliE (104 aa).

It belongs to the FliE family.

It localises to the bacterial flagellum basal body. The sequence is that of Flagellar hook-basal body complex protein FliE from Enterobacter sp. (strain 638).